We begin with the raw amino-acid sequence, 147 residues long: Peptide methionine sulfoxide reductase MsrB (147 aa).

Positions 8-131 (KEELKKILTE…NSASLKFIPK (124 aa)) constitute a MsrB domain. The Nucleophile role is filled by cysteine 120.

This sequence belongs to the MsrB Met sulfoxide reductase family.

It carries out the reaction L-methionyl-[protein] + [thioredoxin]-disulfide + H2O = L-methionyl-(R)-S-oxide-[protein] + [thioredoxin]-dithiol. This chain is Peptide methionine sulfoxide reductase MsrB, found in Clostridium perfringens (strain SM101 / Type A).